A 470-amino-acid polypeptide reads, in one-letter code: Protein escargot (470 aa).

Positions L271–Y309 are disordered. 4 C2H2-type zinc fingers span residues Y309–H331, F344–H366, C370–H392, and F398–H420. The C2H2-type 5; atypical zinc finger occupies Y426–C449. Residues G448–P470 form a disordered region.

The protein belongs to the snail C2H2-type zinc-finger protein family. In terms of tissue distribution, expression is complex and dynamic. In early embryogenesis, expression begins on the dorsal side of the embryo. Expressed in a pattern of longitudinal stripes early in germband elongation. Later in embryogenesis, expression is in cells that correspond to the wing, haltere, leg and genital imaginal disks and the abdominal histoblasts. In the embryonic leg disk, expression is restricted to imaginal cells. Also expressed in the central nervous system (CNS), tracheae and head of stage 14 embryos. CNS and tracheal expression decays during later stages, though head expression persists until late in embryogenesis. In third instar larvae, expression is seen in the brain and in regions of many imaginal tissues including the eye-antennal, wing, leg and haltere disks. Expressed in embryonic, larval and adult male germline stem cells and in the somatic cells of the embryonic gonads.

It localises to the nucleus. Its function is as follows. Transcription factor that can both stimulate and repress transcription. Binds to the consensus DNA sequence 5'-A/GCAGGTG-3'. Regulates cell motility and adhesion during tracheal morphogenesis by stimulating transcription of the DE-cadherin gene shg at branch tips, thereby promoting tracheal tube fusion. Maintains diploidy in imaginal cells by inhibiting the transcription of genes required for endoreplication. Required for development of the genital disk and acts as an intrinsic determinant of wing cell fate. The somatic protein is required for maintenance of male germ cells. Acts with other members of the snail protein family to control embryonic central nervous system development. The polypeptide is Protein escargot (esg) (Drosophila melanogaster (Fruit fly)).